Reading from the N-terminus, the 1291-residue chain is MEHLSNLEQPTTMDSYDFQKLTNDENLQGTESQVPSGSKSASTNGLLSAASSAAGSSFGLTPSAILQQKHENAQQGKKQNNSKSFSKKPAIDVHSEDAFPTLLSKTGPSKPRIVSWVRKTASNTSVAGSDSVSRDKIPFSASSRASSTKSTLSSVKETDFVTETLILSPDNQAPRMSFVGKPNSVAEIVRTVMHQTSTRINVSTASKTKNTTFLIQGKTSAVKAARRQILKLIGRRETKTMPCPVFVVGAIIGTNGQNLKSIMDRTSTRIQIPKRNNTANESSDDAKKPEKEENSAASTLDDLEPQYEMTTITIEGDFEGVELAQKDIEAIINERTSNTTVRISHISTELYSLLRGPDGKNIKELEEGRDLKVQIPFAYLDPSAPVNPIVLSGEKSAVRECALYLQGQAEELLRTTIPTMLPIPRRQHRFINGEKGVGIQDILRKSGCSVILPPINGDSDVVSVRGPALNISEGIRLTLERANSTIVDAVNITTAYASSKNPFDIASIVARLFLRSRKLIPLEEECAVQYHLPKREELQSNSNKTVIIEISGKSQEAVREGRAKLLALVNQFPESKFYKVTIDPLLQRYVIGSKGKNLQKLRNEHQVELLVGEYGEEDPDVIVCYIGADDGKSPDQIQKELADLAESVKSSAEASAKIVSEIIQVPSVYHKHIVGPKGTTLNAIIGKSEENVIVQLGKVSYRPDSTDDDVYIRGFSKDVERVVSEIKQVVRDAKNHEILHSHVEEFDFPAQYSKNVIGKNGSNVSSLREDLGVQINVEEGHIRIQGIKKNVEETAARIKSQIEALIDDTILRVNIPNDFHRQLIGSNGKYVRRLEEKFSVRVRFPREDDSSNSTGNELMKPTSPDEVVIRGGKKSVAAAKQELLELYEYEKSIAYTSTIDIPSKAVSRVVGRNGSTVENIRTQFDVKIDIGDVSTEETTPVSVRGAKADVENAIKEISAIAEEVKNLVEKVIKIDREYHRYLIGPNGSKLQNTIKECGGSTDKTETARLISFSNGNSEEERNSVVLRGDKEIVEALETRLLEIVEELKNQVEEKIEVPQRCISSIIGRMGSTRRDIERKTSTMLNIPNVLDPEETVTITIVGSPENCEKAKEMIQEKVASQYTQMITVPDTVYESIMKGILMKKLRSDLKVFVDTPEIKPVQPTEVVLEDHEDGVFPWKLVTHDYTGSSSSEWAVRGHKENVEKAIASLEKSIKQVMENCIAYLGIPTNLHRRIIGSGGSIINKIRKIAQVKIDVPRTPGDEIVVVQGSRAGVVKAKDLIFERLQENQNQE.

The segment covering 1–39 (MEHLSNLEQPTTMDSYDFQKLTNDENLQGTESQVPSGSK) has biased composition (polar residues). Disordered regions lie at residues 1-45 (MEHL…STNG) and 70-91 (HENA…KPAI). Residues 73–88 (AQQGKKQNNSKSFSKK) show a composition bias toward low complexity. Ser115 is subject to Phosphoserine. A disordered region spans residues 124–148 (TSVAGSDSVSRDKIPFSASSRASST). KH domains lie at 166–229 (ILSP…RRQI), 236–328 (RETK…QKDI), 339–405 (TTVR…ALYL), 416–486 (TIPT…NSTI), 575–644 (SKFY…LADL), 658–726 (IVSE…VSEI), 741–798 (SHVE…AARI), 808–883 (DTIL…KQEL), 894–957 (AYTS…IKEI), 967–1040 (LVEK…ETRL), 1050–1114 (QVEE…KEMI), and 1219–1280 (NCIA…KDLI). The tract at residues 266–303 (TSTRIQIPKRNNTANESSDDAKKPEKEENSAASTLDDL) is disordered. The segment covering 268–281 (TRIQIPKRNNTANE) has biased composition (polar residues). Positions 284 to 294 (DDAKKPEKEEN) are enriched in basic and acidic residues. The disordered stretch occupies residues 845–865 (PREDDSSNSTGNELMKPTSPD). Position 934 is a phosphoserine (Ser934). Phosphothreonine is present on Thr935.

It localises to the endoplasmic reticulum. It is found in the cytoplasm. In terms of biological role, required for cell survival under thermal stress. This is Vigilin 1 (vgl1) from Schizosaccharomyces pombe (strain 972 / ATCC 24843) (Fission yeast).